A 1141-amino-acid polypeptide reads, in one-letter code: DNA-directed RNA polymerase subunit beta (1141 aa).

Acidic residues-rich tracts occupy residues 1063 to 1074 (EIEIKEDDDDVS) and 1096 to 1141 (GGNE…GDEE). Residues 1063-1141 (EIEIKEDDDD…VPDEAYGDEE (79 aa)) form a disordered region.

This sequence belongs to the RNA polymerase beta chain family. In terms of assembly, the RNAP catalytic core consists of 2 alpha, 1 beta, 1 beta' and 1 omega subunit. When a sigma factor is associated with the core the holoenzyme is formed, which can initiate transcription.

The enzyme catalyses RNA(n) + a ribonucleoside 5'-triphosphate = RNA(n+1) + diphosphate. In terms of biological role, DNA-dependent RNA polymerase catalyzes the transcription of DNA into RNA using the four ribonucleoside triphosphates as substrates. This is DNA-directed RNA polymerase subunit beta from Moorella thermoacetica (strain ATCC 39073 / JCM 9320).